Consider the following 148-residue polypeptide: Receptor activity-modifying protein 1 (148 aa).

Residues 1–26 (MARALCRLPRRGLWLLLAHHLFMTTA) form the signal peptide. 3 cysteine pairs are disulfide-bonded: Cys27/Cys82, Cys40/Cys72, and Cys57/Cys104. Residues 27–118 (CQEANYGALL…RAVRDPPGSI (92 aa)) are Extracellular-facing. The helical transmembrane segment at 119 to 140 (LYPFIVVPITVTLLVTALVVWQ) threads the bilayer. Topologically, residues 141 to 148 (SKRTEGIV) are cytoplasmic.

Belongs to the RAMP family. In terms of assembly, heterodimer of CALCRL and RAMP1; the interaction induces allosteric modulation of CALCRL function and CGRP1/CALCA and CGRP2/CALCB ligand specificity. Heterodimer of CALCR and RAMP1; interaction forms the AMYR1 receptor complex for amylin/IAPP and CGRP1/CALCA ligands. In terms of tissue distribution, expressed in many tissues including the uterus, bladder, brain, pancreas and gastro-intestinal tract.

The protein resides in the cell membrane. Its function is as follows. Accessory protein that interacts with and modulates the function of G-protein coupled receptors including calcitonin gene-related peptide type 1 receptor (CALCRL) and calcitonin receptor (CALCR). Required for the transport of CALCRL to the plasma membrane. Together with CALCRL, form the receptor complex for the calcitonin gene-related peptides CGRP1/CALCA and CGRP2/CALCB. Together with CALCR, form the AMYR1 receptor complex for amylin/IAPP and CGRP1/CALCA. The polypeptide is Receptor activity-modifying protein 1 (Homo sapiens (Human)).